Here is a 208-residue protein sequence, read N- to C-terminus: Small ribosomal subunit protein uS4 (208 aa).

In terms of domain architecture, S4 RNA-binding spans 98–164 (TRLDNVVYRL…PKVKSIREIA (67 aa)).

It belongs to the universal ribosomal protein uS4 family. As to quaternary structure, part of the 30S ribosomal subunit. Contacts protein S5. The interaction surface between S4 and S5 is involved in control of translational fidelity.

One of the primary rRNA binding proteins, it binds directly to 16S rRNA where it nucleates assembly of the body of the 30S subunit. Its function is as follows. With S5 and S12 plays an important role in translational accuracy. This is Small ribosomal subunit protein uS4 from Ruminiclostridium cellulolyticum (strain ATCC 35319 / DSM 5812 / JCM 6584 / H10) (Clostridium cellulolyticum).